The primary structure comprises 216 residues: Sperm microtubule inner protein 8 (216 aa).

In terms of assembly, microtubule inner protein component of sperm flagellar doublet microtubules. As to expression, expressed in testis, prostate and placenta.

Its subcellular location is the cytoplasm. The protein resides in the cytoskeleton. The protein localises to the flagellum axoneme. In terms of biological role, microtubule inner protein (MIP) part of the dynein-decorated doublet microtubules (DMTs) in flagellum axoneme. May serve to reinforce and thus stabilize the microtubule structure in the sperm flagella. The chain is Sperm microtubule inner protein 8 from Homo sapiens (Human).